A 303-amino-acid polypeptide reads, in one-letter code: Coenzyme PQQ synthesis protein B (303 aa).

Belongs to the PqqB family.

It participates in cofactor biosynthesis; pyrroloquinoline quinone biosynthesis. Its function is as follows. May be involved in the transport of PQQ or its precursor to the periplasm. In Acinetobacter baumannii (strain ACICU), this protein is Coenzyme PQQ synthesis protein B.